A 293-amino-acid polypeptide reads, in one-letter code: Elongation factor Ts (293 aa).

Positions 81-84 (TDFV) are involved in Mg(2+) ion dislocation from EF-Tu.

The protein belongs to the EF-Ts family.

The protein localises to the cytoplasm. In terms of biological role, associates with the EF-Tu.GDP complex and induces the exchange of GDP to GTP. It remains bound to the aminoacyl-tRNA.EF-Tu.GTP complex up to the GTP hydrolysis stage on the ribosome. In Thioalkalivibrio sulfidiphilus (strain HL-EbGR7), this protein is Elongation factor Ts.